A 794-amino-acid polypeptide reads, in one-letter code: Phosphoribosylformylglycinamidine synthase subunit PurL (794 aa).

Residue His47 is part of the active site. The ATP site is built by Tyr50 and Lys89. Residue Glu91 participates in Mg(2+) binding. Substrate is bound by residues 92–95 and Arg114; that span reads SHNH. The active-site Proton acceptor is His93. Asp115 provides a ligand contact to Mg(2+). Gln238 is a substrate binding site. Asp266 contacts Mg(2+). A substrate-binding site is contributed by 310–312; that stretch reads ESQ. The ATP site is built by Asp522 and Gly559. Residue Asn560 coordinates Mg(2+). Residue Ser562 participates in substrate binding.

This sequence belongs to the FGAMS family. In terms of assembly, monomer. Part of the FGAM synthase complex composed of 1 PurL, 1 PurQ and 2 PurS subunits.

Its subcellular location is the cytoplasm. It carries out the reaction N(2)-formyl-N(1)-(5-phospho-beta-D-ribosyl)glycinamide + L-glutamine + ATP + H2O = 2-formamido-N(1)-(5-O-phospho-beta-D-ribosyl)acetamidine + L-glutamate + ADP + phosphate + H(+). The protein operates within purine metabolism; IMP biosynthesis via de novo pathway; 5-amino-1-(5-phospho-D-ribosyl)imidazole from N(2)-formyl-N(1)-(5-phospho-D-ribosyl)glycinamide: step 1/2. Its function is as follows. Part of the phosphoribosylformylglycinamidine synthase complex involved in the purines biosynthetic pathway. Catalyzes the ATP-dependent conversion of formylglycinamide ribonucleotide (FGAR) and glutamine to yield formylglycinamidine ribonucleotide (FGAM) and glutamate. The FGAM synthase complex is composed of three subunits. PurQ produces an ammonia molecule by converting glutamine to glutamate. PurL transfers the ammonia molecule to FGAR to form FGAM in an ATP-dependent manner. PurS interacts with PurQ and PurL and is thought to assist in the transfer of the ammonia molecule from PurQ to PurL. The polypeptide is Phosphoribosylformylglycinamidine synthase subunit PurL (Prochlorococcus marinus (strain MIT 9303)).